Consider the following 320-residue polypeptide: F-box protein At2g02240 (320 aa).

An F-box domain is found at 58–104 (TSPFDVLPEDCISNIISFTSPRDACVAASVSKTFESAVSSDCVWDKF).

The sequence is that of F-box protein At2g02240 from Arabidopsis thaliana (Mouse-ear cress).